We begin with the raw amino-acid sequence, 237 residues long: MNYDSVYKSNKLRSFPYSRRRGIISLKERIIELNRSGKRGVIAEYKRRSPSGLKVDYSIEDYLSYVMEHRIAGLSILTEPSFFNGSFQDVVVAHRYNIPILVKDFVPDSEFVDYGFNAGGDAVLVILDFLDYESIKRIVERAADLGMDVLEEFHNQDALKRQYIRDNVMIGYNRRDLTNLLMDEKIPDFSGEVRILESGISIDNVKNLDLKFQGYLIGTSILKKDGTLEYLEMEGII.

The protein belongs to the TrpC family.

It catalyses the reaction 1-(2-carboxyphenylamino)-1-deoxy-D-ribulose 5-phosphate + H(+) = (1S,2R)-1-C-(indol-3-yl)glycerol 3-phosphate + CO2 + H2O. The protein operates within amino-acid biosynthesis; L-tryptophan biosynthesis; L-tryptophan from chorismate: step 4/5. This is Indole-3-glycerol phosphate synthase from Thermoplasma volcanium (strain ATCC 51530 / DSM 4299 / JCM 9571 / NBRC 15438 / GSS1).